Here is a 151-residue protein sequence, read N- to C-terminus: Acidic phospholipase A2 5 (151 aa).

The signal sequence occupies residues 1–27 (MYPAHLLVLLAVCVSLLGAASIPARPL). 7 disulfides stabilise this stretch: Cys38–Cys104, Cys54–Cys151, Cys56–Cys72, Cys71–Cys132, Cys78–Cys125, Cys88–Cys118, and Cys111–Cys123. 3 residues coordinate Ca(2+): Tyr55, Gly57, and Gly59. The active site involves His75. Asp76 lines the Ca(2+) pocket. Residue Asp126 is part of the active site.

The protein belongs to the phospholipase A2 family. Group I subfamily. D49 sub-subfamily. The cofactor is Ca(2+). As to expression, expressed by the venom gland.

It localises to the secreted. The enzyme catalyses a 1,2-diacyl-sn-glycero-3-phosphocholine + H2O = a 1-acyl-sn-glycero-3-phosphocholine + a fatty acid + H(+). Functionally, PLA2 catalyzes the calcium-dependent hydrolysis of the 2-acyl groups in 3-sn-phosphoglycerides. The sequence is that of Acidic phospholipase A2 5 from Tropidechis carinatus (Australian rough-scaled snake).